A 200-amino-acid chain; its full sequence is dITP/XTP pyrophosphatase (200 aa).

7–12 is a binding site for substrate; the sequence is TQNKRK. Glu-42 and Asp-71 together coordinate Mg(2+). Residue Asp-71 is the Proton acceptor of the active site. Residues Ser-72, 156–159, Lys-179, and 184–185 contribute to the substrate site; these read FGYD and HR.

This sequence belongs to the HAM1 NTPase family. Homodimer. Requires Mg(2+) as cofactor.

It carries out the reaction XTP + H2O = XMP + diphosphate + H(+). It catalyses the reaction dITP + H2O = dIMP + diphosphate + H(+). The enzyme catalyses ITP + H2O = IMP + diphosphate + H(+). Pyrophosphatase that catalyzes the hydrolysis of nucleoside triphosphates to their monophosphate derivatives, with a high preference for the non-canonical purine nucleotides XTP (xanthosine triphosphate), dITP (deoxyinosine triphosphate) and ITP. Seems to function as a house-cleaning enzyme that removes non-canonical purine nucleotides from the nucleotide pool, thus preventing their incorporation into DNA/RNA and avoiding chromosomal lesions. This Malacoplasma penetrans (strain HF-2) (Mycoplasma penetrans) protein is dITP/XTP pyrophosphatase.